A 581-amino-acid chain; its full sequence is Protein phosphatase 2C 70 (581 aa).

The Extracellular portion of the chain corresponds to 1–7; the sequence is MAMIGMN. A helical transmembrane segment spans residues 8–28; that stretch reads IIGLFMVLMLLLISLIILFAC. The Cytoplasmic segment spans residues 29–581; it reads KPWRYFSRFR…IIYLDFDTSL (553 aa). One can recognise an FHA domain in the interval 208–259; it reads VKLGRVSPSDLALKDSEVSGKHAQITWNSTKFKWELVDMGSLNGTLVNSHSI. Positions 304 to 577 constitute a PPM-type phosphatase domain; it reads KIGVASDPMA…DNTSIIYLDF (274 aa). Residues Asp-346, Gly-347, Asp-521, and Asp-568 each contribute to the Mn(2+) site.

In terms of assembly, association of RLK5 with kapp domain is dependent on phosphorylation of RLK5 and can be abolished by dephosphorylation. Interacts with SERK1 and CDC48A. Component of the SERK1 signaling complex, composed of KAPP, CDC48A, GRF6 or GRF7, SERK1, SERK2, SERK3/BAK1 and BRI1. Interacts with CLV1. Mg(2+) serves as cofactor. Mn(2+) is required as a cofactor. As to expression, expressed in all tissues examined.

The protein resides in the cell membrane. It catalyses the reaction O-phospho-L-seryl-[protein] + H2O = L-seryl-[protein] + phosphate. It carries out the reaction O-phospho-L-threonyl-[protein] + H2O = L-threonyl-[protein] + phosphate. Dephosphorylates the Ser/Thr receptor-like kinase RLK5. May function as a signaling component in a pathway involving RLK5. Binds and dephosphorylates CLAVATA1 (CLV1). Functions as a negative regulator of the CLV1 signaling in plant development. Dephosphorylates SERK1 receptor kinase on threonine residues in the A-loop. Dephosphorylation of SERK1 controls SERK1 internalization. Component of a signaling pathway which mediates adaptation to NaCl stress. Is not a component of the SALT OVERLY SENSITIVE (SOS) pathway. The protein is Protein phosphatase 2C 70 of Arabidopsis thaliana (Mouse-ear cress).